The chain runs to 347 residues: GMP reductase (347 aa).

108-131 serves as a coordination point for NADP(+); sequence ADFEKTKQILDLNPALNFVCIDVA. The K(+) site is built by G181 and G183. C186 acts as the Thioimidate intermediate in catalysis. An NADP(+)-binding site is contributed by 216 to 239; that stretch reads IVSDGGCTTPGDVAKAFGGGADFV.

This sequence belongs to the IMPDH/GMPR family. GuaC type 1 subfamily. In terms of assembly, homotetramer.

The enzyme catalyses IMP + NH4(+) + NADP(+) = GMP + NADPH + 2 H(+). In terms of biological role, catalyzes the irreversible NADPH-dependent deamination of GMP to IMP. It functions in the conversion of nucleobase, nucleoside and nucleotide derivatives of G to A nucleotides, and in maintaining the intracellular balance of A and G nucleotides. The polypeptide is GMP reductase (Escherichia coli O7:K1 (strain IAI39 / ExPEC)).